Reading from the N-terminus, the 325-residue chain is Dimethylsulfide dehydrogenase subunit beta (325 aa).

3 4Fe-4S ferredoxin-type domains span residues 6-35 (ISMVLDLNKCIGCQTCTSACKLQWTNRNGR), 123-154 (SYYFYLPRICNHCANPGCLAACARNAIYKRQE), and 156-185 (GIVLVDQERCRGYRYCITACPYKKVYFNEQ). Residues C15, C18, C21, C25, C132, C135, and C140 each contribute to the [4Fe-4S] cluster site. Residues C144, C165, and C171 each contribute to the [3Fe-4S] cluster site. [4Fe-4S] cluster contacts are provided by C175, C192, C195, C207, and C211.

In terms of assembly, heterotrimer of alpha, beta and gamma subunits. [3Fe-4S] cluster is required as a cofactor. It depends on [4Fe-4S] cluster as a cofactor.

The protein localises to the periplasm. Functionally, electron transfer subunit of the dehydrogenase during anaerobic growth on dimethyl sulfide. The polypeptide is Dimethylsulfide dehydrogenase subunit beta (ddhB) (Rhodovulum sulfidophilum (Rhodobacter sulfidophilus)).